A 248-amino-acid chain; its full sequence is MRGLVTAVRTLTVLPVPGKEAERFSSALFWFPVVGLFLGLLQAGAGYLAMLSGWPELAASMVLIAGVLLTRGMHADGFADMADGFFGGRDRESRLRIMKDPSVGSFGAIGLILLFLFKSIVLVKLLAFGLYPWIVSGVLLARLVQVALASMLPYARREGGTAAGFVEGAGIQHFVAAFLVALFILLLLMNGEMLPSGIGLSAAIAGAVLMSLLTIKKIGGVTGDVLGASSEFTEVLVWVSGVFLALCS.

A run of 6 helical transmembrane segments spans residues 28–48, 103–123, 126–146, 169–189, 193–213, and 225–245; these read LFWF…AGYL, VGSF…IVLV, LAFG…LVQV, AGIQ…LLLM, MLPS…MSLL, and VLGA…VFLA.

It belongs to the CobS family. Mg(2+) is required as a cofactor.

The protein resides in the cell inner membrane. The enzyme catalyses alpha-ribazole + adenosylcob(III)inamide-GDP = adenosylcob(III)alamin + GMP + H(+). It catalyses the reaction alpha-ribazole 5'-phosphate + adenosylcob(III)inamide-GDP = adenosylcob(III)alamin 5'-phosphate + GMP + H(+). Its pathway is cofactor biosynthesis; adenosylcobalamin biosynthesis; adenosylcobalamin from cob(II)yrinate a,c-diamide: step 7/7. In terms of biological role, joins adenosylcobinamide-GDP and alpha-ribazole to generate adenosylcobalamin (Ado-cobalamin). Also synthesizes adenosylcobalamin 5'-phosphate from adenosylcobinamide-GDP and alpha-ribazole 5'-phosphate. The chain is Adenosylcobinamide-GDP ribazoletransferase from Chlorobium phaeobacteroides (strain BS1).